Reading from the N-terminus, the 142-residue chain is Large ribosomal subunit protein uL13 (142 aa).

The protein belongs to the universal ribosomal protein uL13 family. Part of the 50S ribosomal subunit.

Its function is as follows. This protein is one of the early assembly proteins of the 50S ribosomal subunit, although it is not seen to bind rRNA by itself. It is important during the early stages of 50S assembly. This Halorhodospira halophila (strain DSM 244 / SL1) (Ectothiorhodospira halophila (strain DSM 244 / SL1)) protein is Large ribosomal subunit protein uL13.